Here is a 145-residue protein sequence, read N- to C-terminus: Transcriptional regulator SlyA (145 aa).

Residues 2–135 enclose the HTH marR-type domain; sequence ELPLGSDLAR…LALLVSRLEK (134 aa). Residues 49–72 constitute a DNA-binding region (H-T-H motif); that stretch reads QIQLAKAIGIEQPSLVRTLDQLEE.

It belongs to the SlyA family. As to quaternary structure, homodimer.

In terms of biological role, transcription regulator that can specifically activate or repress expression of target genes. Regulates genes involved in production of antibiotic and exoenzyme virulence determinants in the phytopathogen. Required for the expression of the virulence protein evf during Drosophila melanogaster infection. In Pectobacterium carotovorum subsp. carotovorum (Erwinia carotovora subsp. carotovora), this protein is Transcriptional regulator SlyA.